The primary structure comprises 276 residues: MGIKKFRPTSPGVRQMTVSTFEEITKVDPEKSLLTPLSKSGGRNAHGKITVRHRGGGLKRHYRIIDFKRNKDDIPAKVASVEYDPNRTANIALLHYVDGEKRYIIAPKGLKVGEMIFSGPESDIKVGNALPLINIPVGTIIHNIEMKPGKGGQIARSAGNSAQLMAKEGRYALVRLPSGEVRQILIECRATIGQVGNLDHENVTIGKAGRKRKMGIRPTVRGSAMNPNDHPHGGGEGRSPIGRPSPVTPWGKPALGYKTRKKNKHSDKFIVTGRKR.

The interval 219 to 276 (TVRGSAMNPNDHPHGGGEGRSPIGRPSPVTPWGKPALGYKTRKKNKHSDKFIVTGRKR) is disordered.

It belongs to the universal ribosomal protein uL2 family. In terms of assembly, part of the 50S ribosomal subunit. Forms a bridge to the 30S subunit in the 70S ribosome.

Its function is as follows. One of the primary rRNA binding proteins. Required for association of the 30S and 50S subunits to form the 70S ribosome, for tRNA binding and peptide bond formation. It has been suggested to have peptidyltransferase activity; this is somewhat controversial. Makes several contacts with the 16S rRNA in the 70S ribosome. In Alkaliphilus metalliredigens (strain QYMF), this protein is Large ribosomal subunit protein uL2.